The following is a 287-amino-acid chain: Protease HtpX (287 aa).

2 consecutive transmembrane segments (helical) span residues 4–24 and 36–56; these read IMLFLATNLAVVLVLSVVLNI and LSGLLVMAAVFGFGGALISLM. Histidine 143 is a binding site for Zn(2+). Residue glutamate 144 is part of the active site. Histidine 147 serves as a coordination point for Zn(2+). The next 2 membrane-spanning stretches (helical) occupy residues 158 to 178 and 192 to 212; these read LMQGVVNTFVIFLSRFIANIV and MVYFGVSMVLELVFGFLASFI. Position 221 (glutamate 221) interacts with Zn(2+).

The protein belongs to the peptidase M48B family. Zn(2+) is required as a cofactor.

It is found in the cell inner membrane. The chain is Protease HtpX from Vibrio parahaemolyticus serotype O3:K6 (strain RIMD 2210633).